Reading from the N-terminus, the 399-residue chain is CCA-adding enzyme (399 aa).

Residues Gly32 and Arg35 each contribute to the ATP site. CTP is bound by residues Gly32 and Arg35. Residues Asp45 and Asp47 each contribute to the Mg(2+) site. Positions 116, 159, 162, 165, and 168 each coordinate ATP. CTP is bound by residues Arg116, Asp159, Arg162, Arg165, and Arg168.

The protein belongs to the tRNA nucleotidyltransferase/poly(A) polymerase family. Bacterial CCA-adding enzyme type 3 subfamily. As to quaternary structure, homodimer. Requires Mg(2+) as cofactor.

It carries out the reaction a tRNA precursor + 2 CTP + ATP = a tRNA with a 3' CCA end + 3 diphosphate. The catalysed reaction is a tRNA with a 3' CCA end + 2 CTP + ATP = a tRNA with a 3' CCACCA end + 3 diphosphate. Functionally, catalyzes the addition and repair of the essential 3'-terminal CCA sequence in tRNAs without using a nucleic acid template. Adds these three nucleotides in the order of C, C, and A to the tRNA nucleotide-73, using CTP and ATP as substrates and producing inorganic pyrophosphate. tRNA 3'-terminal CCA addition is required both for tRNA processing and repair. Also involved in tRNA surveillance by mediating tandem CCA addition to generate a CCACCA at the 3' terminus of unstable tRNAs. While stable tRNAs receive only 3'-terminal CCA, unstable tRNAs are marked with CCACCA and rapidly degraded. This chain is CCA-adding enzyme, found in Streptococcus sanguinis (strain SK36).